The following is a 260-amino-acid chain: Cytochrome c oxidase subunit 3 (260 aa).

The Mitochondrial matrix portion of the chain corresponds to 1 to 15; that stretch reads MTHQTHAYHMVNPSP. A helical transmembrane segment spans residues 16–34; that stretch reads WPLTGALSALLMTSGLAMW. The Mitochondrial intermembrane segment spans residues 35-40; it reads FHFNST. Residues 41 to 66 form a helical membrane-spanning segment; that stretch reads ALLMIGLTTNMLTMYQWWRDIIREST. Over 67-72 the chain is Mitochondrial matrix; sequence FQGHHT. A helical transmembrane segment spans residues 73 to 105; that stretch reads PAVQKGLRYGMILFIISEVLFFTGFFWAFYHSS. Residues 106 to 128 are Mitochondrial intermembrane-facing; the sequence is LAPTPELGGCWPPTGIHPLNPLE. The helical transmembrane segment at 129–152 threads the bilayer; sequence VPLLNTSVLLASGVSITWAHHSLM. Residues 153 to 155 lie on the Mitochondrial matrix side of the membrane; it reads EGD. Residues 156 to 183 traverse the membrane as a helical segment; that stretch reads RNHMLQALFITITLGVYFTLLQASEYYE. Residues 184 to 190 are Mitochondrial intermembrane-facing; sequence APFTISD. The chain crosses the membrane as a helical span at residues 191–223; it reads GVYGSTFFVATGFHGLHVIIGSTFLIVCFFRQL. Residues 224–232 lie on the Mitochondrial matrix side of the membrane; the sequence is KFHFTSNHH. Residues 233 to 256 traverse the membrane as a helical segment; the sequence is FGFEAAAWYWHFVDVVWLFLYVSI. Topologically, residues 257 to 260 are mitochondrial intermembrane; the sequence is YWWG.

The protein belongs to the cytochrome c oxidase subunit 3 family. As to quaternary structure, component of the cytochrome c oxidase (complex IV, CIV), a multisubunit enzyme composed of 14 subunits. The complex is composed of a catalytic core of 3 subunits MT-CO1, MT-CO2 and MT-CO3, encoded in the mitochondrial DNA, and 11 supernumerary subunits COX4I, COX5A, COX5B, COX6A, COX6B, COX6C, COX7A, COX7B, COX7C, COX8 and NDUFA4, which are encoded in the nuclear genome. The complex exists as a monomer or a dimer and forms supercomplexes (SCs) in the inner mitochondrial membrane with NADH-ubiquinone oxidoreductase (complex I, CI) and ubiquinol-cytochrome c oxidoreductase (cytochrome b-c1 complex, complex III, CIII), resulting in different assemblies (supercomplex SCI(1)III(2)IV(1) and megacomplex MCI(2)III(2)IV(2)).

The protein resides in the mitochondrion inner membrane. The enzyme catalyses 4 Fe(II)-[cytochrome c] + O2 + 8 H(+)(in) = 4 Fe(III)-[cytochrome c] + 2 H2O + 4 H(+)(out). In terms of biological role, component of the cytochrome c oxidase, the last enzyme in the mitochondrial electron transport chain which drives oxidative phosphorylation. The respiratory chain contains 3 multisubunit complexes succinate dehydrogenase (complex II, CII), ubiquinol-cytochrome c oxidoreductase (cytochrome b-c1 complex, complex III, CIII) and cytochrome c oxidase (complex IV, CIV), that cooperate to transfer electrons derived from NADH and succinate to molecular oxygen, creating an electrochemical gradient over the inner membrane that drives transmembrane transport and the ATP synthase. Cytochrome c oxidase is the component of the respiratory chain that catalyzes the reduction of oxygen to water. Electrons originating from reduced cytochrome c in the intermembrane space (IMS) are transferred via the dinuclear copper A center (CU(A)) of subunit 2 and heme A of subunit 1 to the active site in subunit 1, a binuclear center (BNC) formed by heme A3 and copper B (CU(B)). The BNC reduces molecular oxygen to 2 water molecules using 4 electrons from cytochrome c in the IMS and 4 protons from the mitochondrial matrix. The sequence is that of Cytochrome c oxidase subunit 3 (MT-CO3) from Bos mutus grunniens (Wild yak).